A 1005-amino-acid polypeptide reads, in one-letter code: Espin-like protein (1005 aa).

10 ANK repeats span residues 1–31 (MEAQ…RPDI), 35–64 (LGAG…LPGN), 69–99 (NGAT…GLQD), 103–132 (SGVS…AATL), 136–166 (EGAL…GVNQ), 170–200 (SGAS…DVRL), 204–234 (DGMS…GLTA), 238–267 (EGAT…PIMR), 270–299 (WGGT…DPFL), and 303–332 (DGYT…PVRV). 2 disordered regions span residues 355-383 (EERR…VPRE) and 458-480 (ADHP…AAEQ). Positions 458–469 (ADHPPEDQDQSQ) are enriched in basic and acidic residues. A coiled-coil region spans residues 502–539 (EDDLVYLEKQINDLQLRRRCQEYESELGRLAAQLQALL). 4 disordered regions span residues 611–643 (LAQG…QREI), 692–729 (PRGD…GPGL), 764–794 (LEAQ…PRLG), and 951–975 (PHAS…SQGS).

Interacts with MYO3A (via C-terminus). Interacts with MYO3B (via C-terminus). In terms of tissue distribution, expressed in inner ear hair cells. Expressed in utricle hair bundles (at protein level). Expressed in choclea (at protein level).

It localises to the cell projection. The protein localises to the stereocilium. Functionally, binds to but does not cross-link actin. Required for the formation and maintenance of inner ear hair cell stereocilia and staircase formation. Essential for normal hearing. This is Espin-like protein (Espnl) from Mus musculus (Mouse).